Consider the following 447-residue polypeptide: Glutamine synthetase (447 aa).

Residues 20 to 105 (RDVKFIRTQF…ILGDVYLPDG (86 aa)) form the GS beta-grasp domain. The GS catalytic domain maps to 112 to 447 (PRYVLKTAIK…WELSRYLSML (336 aa)). 2 residues coordinate Mg(2+): Glu135 and Glu137. Glu187 lines the ATP pocket. Glu192 and Glu199 together coordinate Mg(2+). L-glutamate-binding positions include 243 to 244 (NG) and Gly244. Residue His248 coordinates Mg(2+). An ATP-binding site is contributed by Ser252. Positions 301, 307, and 319 each coordinate L-glutamate. Residues Arg319 and Arg324 each coordinate ATP. Residue Glu336 participates in Mg(2+) binding. Arg338 is a binding site for L-glutamate.

It belongs to the glutamine synthetase family. As to quaternary structure, homohexamer. Interacts and forms stable complexes with the regulatory protein GlnK1. Mg(2+) is required as a cofactor.

Its subcellular location is the cytoplasm. It catalyses the reaction L-glutamate + NH4(+) + ATP = L-glutamine + ADP + phosphate + H(+). Its activity is regulated as follows. Directly stimulated by the effector molecule 2-oxoglutarate. Inhibited by GlnK1. 2-oxoglutarate antagonizes the inhibitory effects of GlnK1, but does not prevent GlnK1/GlnA1 complex formation. Probably involved in nitrogen metabolism via ammonium assimilation. Catalyzes the ATP-dependent biosynthesis of glutamine from glutamate and ammonia. This Methanosarcina mazei (strain ATCC BAA-159 / DSM 3647 / Goe1 / Go1 / JCM 11833 / OCM 88) (Methanosarcina frisia) protein is Glutamine synthetase.